The following is a 31-amino-acid chain: Cycloviolin-A (31 aa).

A cross-link (cyclopeptide (Gly-Asn)) is located at residues 1-31; sequence GVIPCGESCVFIPCISAAIGCSCKNKVCYRN. Intrachain disulfides connect C5–C21, C9–C23, and C14–C28.

In terms of processing, this is a cyclic peptide.

In terms of biological role, probably participates in a plant defense mechanism. Has anti-HIV activity. This is Cycloviolin-A from Leonia cymosa (Sacha uba).